Consider the following 260-residue polypeptide: Sphinganine C4-monooxygenase 1 (260 aa).

Helical transmembrane passes span Leu11–Leu31, Ser55–Phe75, and Phe92–Phe112. The Fatty acid hydroxylase domain occupies Phe99–Thr235. Positions His114–His118 match the Histidine box-1 motif. The Histidine box-2 signature appears at His128–His132. Positions Tyr207–Gln213 match the Histidine box-3 motif.

Belongs to the sterol desaturase family. Requires Fe cation as cofactor. As to expression, ubiquitous, with higher levels in flowers and roots.

Its subcellular location is the endoplasmic reticulum membrane. The catalysed reaction is a dihydroceramide + 2 Fe(II)-[cytochrome b5] + O2 + 2 H(+) = a phytoceramide + 2 Fe(III)-[cytochrome b5] + H2O. It functions in the pathway membrane lipid metabolism; sphingolipid biosynthesis. In terms of biological role, involved in sphingolipid trihydroxy long-chain base (4-hydroxysphinganine) biosynthesis. Can use C18- and C20-sphinganine as substrates to produce C18- and C20-phytosphinganines (D-ribo-2-amino-1,3,4-trihydroxyoctadecane and -eicosane). In Arabidopsis thaliana (Mouse-ear cress), this protein is Sphinganine C4-monooxygenase 1 (SBH1).